A 452-amino-acid chain; its full sequence is 1-aminocyclopropane-1-carboxylate synthase 3 (452 aa).

K283 is modified (N6-(pyridoxal phosphate)lysine).

Belongs to the class-I pyridoxal-phosphate-dependent aminotransferase family. Requires pyridoxal 5'-phosphate as cofactor. As to expression, expressed in leaves. Expressed in roots and leaf blades. Expressed at low levels in leaf sheaths and shoot bases.

The catalysed reaction is S-adenosyl-L-methionine = 1-aminocyclopropane-1-carboxylate + S-methyl-5'-thioadenosine + H(+). The protein operates within alkene biosynthesis; ethylene biosynthesis via S-adenosyl-L-methionine; ethylene from S-adenosyl-L-methionine: step 1/2. Functionally, catalyzes the formation of 1-aminocyclopropane-1-carboxylate, a direct precursor of ethylene in higher plants. This is 1-aminocyclopropane-1-carboxylate synthase 3 from Oryza sativa subsp. japonica (Rice).